The following is a 281-amino-acid chain: Large ribosomal subunit protein uL2 (281 aa).

Residues 223 to 255 (TVRGSVMNPNDHPHGGGEGRAPIGRKSPVTPWG) form a disordered region.

The protein belongs to the universal ribosomal protein uL2 family. As to quaternary structure, part of the 50S ribosomal subunit. Forms a bridge to the 30S subunit in the 70S ribosome.

Its function is as follows. One of the primary rRNA binding proteins. Required for association of the 30S and 50S subunits to form the 70S ribosome, for tRNA binding and peptide bond formation. It has been suggested to have peptidyltransferase activity; this is somewhat controversial. Makes several contacts with the 16S rRNA in the 70S ribosome. The chain is Large ribosomal subunit protein uL2 from Mycoplasma capricolum subsp. capricolum (strain California kid / ATCC 27343 / NCTC 10154).